Here is a 499-residue protein sequence, read N- to C-terminus: Glycerol kinase (499 aa).

Residue Thr17 coordinates ADP. Residues Thr17, Thr18, and Ser19 each contribute to the ATP site. Residue Thr17 coordinates sn-glycerol 3-phosphate. Arg21 contributes to the ADP binding site. Residues Arg87, Glu88, Tyr139, and Asp243 each coordinate sn-glycerol 3-phosphate. Glycerol-binding residues include Arg87, Glu88, Tyr139, Asp243, and Gln244. ADP-binding residues include Thr265 and Gly308. ATP contacts are provided by Thr265, Gly308, Gln312, and Gly409. ADP-binding residues include Gly409 and Asn413.

The protein belongs to the FGGY kinase family.

The catalysed reaction is glycerol + ATP = sn-glycerol 3-phosphate + ADP + H(+). It functions in the pathway polyol metabolism; glycerol degradation via glycerol kinase pathway; sn-glycerol 3-phosphate from glycerol: step 1/1. Inhibited by fructose 1,6-bisphosphate (FBP). Key enzyme in the regulation of glycerol uptake and metabolism. Catalyzes the phosphorylation of glycerol to yield sn-glycerol 3-phosphate. The chain is Glycerol kinase from Pseudomonas putida (strain GB-1).